The primary structure comprises 716 residues: Phospholipid phosphatase-related protein type 3 (716 aa).

The next 3 helical transmembrane spans lie at 18–38, 70–90, and 131–151; these read LPCF…SLYF, LIPL…SIMV, and FVGV…VIQL. Asn-167 carries an N-linked (GlcNAc...) asparagine glycan. 3 consecutive transmembrane segments (helical) span residues 205–225, 231–251, and 261–281; these read HATL…SVIS, LKPI…LTQI, and VYAG…HAVG. The interval 311–334 is disordered; that stretch reads SMYQQNKSVSTDELGPPGRLEGVP. The span at 312–321 shows a compositional bias: polar residues; the sequence is MYQQNKSVST. A glycan (N-linked (GlcNAc...) asparagine) is linked at Asn-316. Phosphoserine occurs at positions 320 and 351. Residue Thr-374 is modified to Phosphothreonine. The disordered stretch occupies residues 416-488; that stretch reads GRGLGLPDEA…RVILPPRPGP (73 aa). Ser-426 is modified (phosphoserine). The segment covering 437–460 has biased composition (acidic residues); the sequence is VAEEEEEEEEEEEEEEEEEEEEEG. Phosphoserine is present on Ser-506. Residues 548–589 form a disordered region; sequence AMSKAAGGPKAETASSSSASSDSSQYRSPSDRDSASIVTIDA. Residues 562 to 575 are compositionally biased toward low complexity; the sequence is SSSSASSDSSQYRS. Ser-641 is subject to Phosphoserine. The segment at 664-694 is disordered; that stretch reads GEGLPPPGASEGALGAGSRESTLRRQVGALG.

The protein belongs to the PA-phosphatase related phosphoesterase family.

The protein resides in the membrane. This is Phospholipid phosphatase-related protein type 3 from Rattus norvegicus (Rat).